Here is a 328-residue protein sequence, read N- to C-terminus: Thiamine-monophosphate kinase (328 aa).

Positions 30, 45, 46, and 47 each coordinate Mg(2+). His54 provides a ligand contact to substrate. Residues Asp75 and Asp122 each contribute to the Mg(2+) site. ATP contacts are provided by residues 121 to 122 and Arg146; that span reads GD. Asp211 contributes to the Mg(2+) binding site. Ser213 is a binding site for ATP. Mg(2+) is bound at residue Asp214. Residues Glu262 and Phe321 each coordinate substrate.

This sequence belongs to the thiamine-monophosphate kinase family.

It catalyses the reaction thiamine phosphate + ATP = thiamine diphosphate + ADP. It participates in cofactor biosynthesis; thiamine diphosphate biosynthesis; thiamine diphosphate from thiamine phosphate: step 1/1. In terms of biological role, catalyzes the ATP-dependent phosphorylation of thiamine-monophosphate (TMP) to form thiamine-pyrophosphate (TPP), the active form of vitamin B1. The protein is Thiamine-monophosphate kinase of Haemophilus influenzae (strain ATCC 51907 / DSM 11121 / KW20 / Rd).